The chain runs to 251 residues: Type III pantothenate kinase (251 aa).

ATP is bound at residue 6–13; that stretch reads DCGNSFIK. Substrate is bound by residues Tyr-93 and 100 to 103; that span reads GLDR. The Proton acceptor role is filled by Asp-102. Asp-122 is a K(+) binding site. Thr-125 lines the ATP pocket. Substrate is bound at residue Thr-182.

Belongs to the type III pantothenate kinase family. As to quaternary structure, homodimer. NH4(+) is required as a cofactor. Requires K(+) as cofactor.

It localises to the cytoplasm. It carries out the reaction (R)-pantothenate + ATP = (R)-4'-phosphopantothenate + ADP + H(+). Its pathway is cofactor biosynthesis; coenzyme A biosynthesis; CoA from (R)-pantothenate: step 1/5. Functionally, catalyzes the phosphorylation of pantothenate (Pan), the first step in CoA biosynthesis. The sequence is that of Type III pantothenate kinase from Azotobacter vinelandii (strain DJ / ATCC BAA-1303).